The chain runs to 466 residues: Soluble pyridine nucleotide transhydrogenase (466 aa).

36–45 (ERYQNVGGGC) contributes to the FAD binding site.

It belongs to the class-I pyridine nucleotide-disulfide oxidoreductase family. The cofactor is FAD.

Its subcellular location is the cytoplasm. It catalyses the reaction NAD(+) + NADPH = NADH + NADP(+). Functionally, conversion of NADPH, generated by peripheral catabolic pathways, to NADH, which can enter the respiratory chain for energy generation. The sequence is that of Soluble pyridine nucleotide transhydrogenase from Escherichia fergusonii (strain ATCC 35469 / DSM 13698 / CCUG 18766 / IAM 14443 / JCM 21226 / LMG 7866 / NBRC 102419 / NCTC 12128 / CDC 0568-73).